A 291-amino-acid polypeptide reads, in one-letter code: uncharacterized protein (291 aa).

This is an uncharacterized protein from Haemophilus influenzae (strain ATCC 51907 / DSM 11121 / KW20 / Rd).